Reading from the N-terminus, the 316-residue chain is Rhomboid-related protein 4 (316 aa).

At 1–21 the chain is on the cytoplasmic side; that stretch reads MQRRTRGIDTGLLLLLSQVFH. A helical membrane pass occupies residues 22–42; it reads IGINNIPPVTLATLAVNVWFF. The Extracellular portion of the chain corresponds to 43-103; that stretch reads LNPWKPLYHS…KLEKRLGSRW (61 aa). Residues 104-124 traverse the membrane as a helical segment; sequence FAYIIATFSLLTGVVYLLLQF. The Cytoplasmic segment spans residues 125 to 137; sequence ASAELMNQPDFKR. A helical membrane pass occupies residues 138–154; the sequence is NCAVGFSGVLFALKVLS. Residue S144 is the Nucleophile of the active site. Residues 155-182 lie on the Extracellular side of the membrane; it reads NHYCPGGFVNILGFPVPNRFACWAELAA. The helical transmembrane segment at 183-203 threads the bilayer; it reads IHFCTPGTSFAGHLAGILVGL. Residue H195 is part of the active site. Topologically, residues 204-316 are cytoplasmic; the sequence is MYTQGPLKKI…RQRLHRFDGQ (113 aa). Residues 269 to 284 are ubiquitin-binding domain (UBD); it reads SEEEQLERALRASIWD. The tract at residues 301 to 316 is VCP/p97-interacting motif (VIM); sequence PEEEMRRQRLHRFDGQ.

The protein belongs to the peptidase S54 family. Interacts with BIK and STEAP3. Interacts (via C-terminal domain) with VCP. Interacts with ubiquitin and ubiquitinated proteins. In terms of tissue distribution, expressed in intestine, lung, brain, kidney, epididymis and testis.

It localises to the endoplasmic reticulum membrane. It is found in the mitochondrion membrane. It carries out the reaction Cleaves type-1 transmembrane domains using a catalytic dyad composed of serine and histidine that are contributed by different transmembrane domains.. With respect to regulation, inhibited by aprotinin. In terms of biological role, intramembrane-cleaving serine protease that cleaves single transmembrane or multi-pass membrane proteins in the hydrophobic plane of the membrane, luminal loops and juxtamembrane regions. Involved in regulated intramembrane proteolysis and the subsequent release of functional polypeptides from their membrane anchors. Functional component of endoplasmic reticulum-associated degradation (ERAD) for misfolded membrane proteins. Required for the degradation process of some specific misfolded endoplasmic reticulum (ER) luminal proteins. Participates in the transfer of misfolded proteins from the ER to the cytosol, where they are destroyed by the proteasome in a ubiquitin-dependent manner. Functions in BIK, MPZ, PKD1, PTCRA, RHO, STEAP3 and TRAC processing. Involved in the regulation of exosomal secretion; inhibits the TSAP6-mediated secretion pathway. Involved in the regulation of apoptosis; modulates BIK-mediated apoptotic activity. Also plays a role in the regulation of spermatogenesis; inhibits apoptotic activity in spermatogonia. This chain is Rhomboid-related protein 4 (Rhbdd1), found in Rattus norvegicus (Rat).